The chain runs to 125 residues: Natriuretic peptide GNP1 (125 aa).

An N-terminal signal peptide occupies residues 1–25 (MDPRLVRAGSLVLLLALLVQDQGAA). 2 disordered regions span residues 23-78 (GAAH…PAFK) and 105-125 (VSGM…TGKK). A propeptide spanning residues 26–85 (HPARAGQKYKPLIRRSEEDSQALGQEGDVAARAADEEEDAAGPGDALRQPAFKTLLASRE) is cleaved from the precursor. Cys-94 and Cys-110 are joined by a disulfide.

It belongs to the natriuretic peptide family. Expressed by the venom gland.

Its subcellular location is the secreted. Its function is as follows. Exhibits natriuretic and vasodepressor activity. Acts by stimulating cGMP. The protein is Natriuretic peptide GNP1 of Varanus varius (Lace monitor lizard).